Consider the following 153-residue polypeptide: Xanthine-guanine phosphoribosyltransferase (153 aa).

Residues 37 to 38, R69, and 88 to 96 contribute to the 5-phospho-alpha-D-ribose 1-diphosphate site; these read RG and DDLVDTGGT. GMP is bound at residue R69. D89 lines the Mg(2+) pocket. 2 residues coordinate guanine: D92 and I135. Positions 92 and 135 each coordinate xanthine. GMP-binding positions include 92 to 96 and 134 to 135; these read DTGGT and WI.

It belongs to the purine/pyrimidine phosphoribosyltransferase family. XGPT subfamily. As to quaternary structure, homotetramer. Requires Mg(2+) as cofactor.

Its subcellular location is the cell membrane. The catalysed reaction is GMP + diphosphate = guanine + 5-phospho-alpha-D-ribose 1-diphosphate. The enzyme catalyses XMP + diphosphate = xanthine + 5-phospho-alpha-D-ribose 1-diphosphate. It catalyses the reaction IMP + diphosphate = hypoxanthine + 5-phospho-alpha-D-ribose 1-diphosphate. Its pathway is purine metabolism; GMP biosynthesis via salvage pathway; GMP from guanine: step 1/1. It participates in purine metabolism; XMP biosynthesis via salvage pathway; XMP from xanthine: step 1/1. Purine salvage pathway enzyme that catalyzes the transfer of the ribosyl-5-phosphate group from 5-phospho-alpha-D-ribose 1-diphosphate (PRPP) to the N9 position of the 6-oxopurines guanine and xanthine to form the corresponding ribonucleotides GMP (guanosine 5'-monophosphate) and XMP (xanthosine 5'-monophosphate), with the release of PPi. To a lesser extent, also acts on hypoxanthine. This is Xanthine-guanine phosphoribosyltransferase from Buchnera aphidicola subsp. Baizongia pistaciae (strain Bp).